An 85-amino-acid chain; its full sequence is Antitoxin VapB31 (85 aa).

Functionally, antitoxin component of a type II toxin-antitoxin (TA) system. Upon expression in M.smegmatis neutralizes the effect of cognate toxin VapC31. This chain is Antitoxin VapB31 (vapB31), found in Mycobacterium tuberculosis (strain ATCC 25618 / H37Rv).